A 1169-amino-acid chain; its full sequence is Chromosome partition protein Smc (1169 aa).

32–39 (PNGSGKSN) is a binding site for ATP. Residues 166-507 (DEISGIAEFD…RIKALKEMEE (342 aa)) adopt a coiled-coil conformation. Positions 523–636 (PGIIDIVGNL…ENIDIAKELA (114 aa)) constitute an SMC hinge domain. A coiled-coil region spans residues 676–1030 (SKLNKIADEI…NKKKEVFMEV (355 aa)).

It belongs to the SMC family. Homodimer.

It localises to the cytoplasm. Functionally, required for chromosome condensation and partitioning. The polypeptide is Chromosome partition protein Smc (Methanocaldococcus jannaschii (strain ATCC 43067 / DSM 2661 / JAL-1 / JCM 10045 / NBRC 100440) (Methanococcus jannaschii)).